The primary structure comprises 148 residues: NPC intracellular cholesterol transporter 2 homolog a (148 aa).

The signal sequence occupies residues 1–16 (MLRYAVIACAALVVFA). 3 disulfides stabilise this stretch: Cys-24–Cys-140, Cys-39–Cys-46, and Cys-92–Cys-99. N-linked (GlcNAc...) asparagine glycosylation occurs at Asn-51.

This sequence belongs to the NPC2 family. As to expression, broadly expressed with a higher level of expression in many tissues, including midgut, salivary gland and ventral nerve cord.

It is found in the secreted. Its function is as follows. Functions redundantly with Npc2b in regulating sterol homeostasis and ecdysteroid biosynthesis, probably by controlling the availability of sterol substrate. This is NPC intracellular cholesterol transporter 2 homolog a from Drosophila melanogaster (Fruit fly).